Here is a 198-residue protein sequence, read N- to C-terminus: MNREEQLGVLESLLFAAGDAGLSTEQLTEVMEITHIEALNLLELLSDRYNGSADRGLILLELAGTFQLATKKAHAEFLRKLVEVPSNTVLSQASLETLAIIAYRQPVTRMEVDEVRGVQTDGPIRTLVAKGLVTDKGRVDGAGRAKLYVTTSEFLDAFGLNSLEDLPKLADPATDEPDQNEMDLFFDRFNQSKEQEEE.

The interval 168-198 is disordered; it reads KLADPATDEPDQNEMDLFFDRFNQSKEQEEE.

It belongs to the ScpB family. In terms of assembly, homodimer. Homodimerization may be required to stabilize the binding of ScpA to the Smc head domains. Component of a cohesin-like complex composed of ScpA, ScpB and the Smc homodimer, in which ScpA and ScpB bind to the head domain of Smc. The presence of the three proteins is required for the association of the complex with DNA.

The protein localises to the cytoplasm. Participates in chromosomal partition during cell division. May act via the formation of a condensin-like complex containing Smc and ScpA that pull DNA away from mid-cell into both cell halves. This Listeria monocytogenes serotype 4b (strain CLIP80459) protein is Segregation and condensation protein B.